A 70-amino-acid chain; its full sequence is Putative membrane protein insertion efficiency factor (70 aa).

This sequence belongs to the UPF0161 family.

It localises to the cell membrane. Could be involved in insertion of integral membrane proteins into the membrane. This Clostridium novyi (strain NT) protein is Putative membrane protein insertion efficiency factor.